The sequence spans 351 residues: F-box protein At1g47810 (351 aa).

The F-box domain maps to 8-54 (LQSLDPIPVDVLFEIFLNLPAKFLARFVCVSKLWAKIIRNQDFIRSF).

The protein is F-box protein At1g47810 of Arabidopsis thaliana (Mouse-ear cress).